Consider the following 598-residue polypeptide: Elongation factor 4 (598 aa).

A tr-type G domain is found at 2-184 (NNIRNFAIIA…AIVTKLPAPQ (183 aa)). GTP contacts are provided by residues 14 to 19 (DHGKST) and 131 to 134 (NKVD).

The protein belongs to the TRAFAC class translation factor GTPase superfamily. Classic translation factor GTPase family. LepA subfamily.

It is found in the cell membrane. The enzyme catalyses GTP + H2O = GDP + phosphate + H(+). In terms of biological role, required for accurate and efficient protein synthesis under certain stress conditions. May act as a fidelity factor of the translation reaction, by catalyzing a one-codon backward translocation of tRNAs on improperly translocated ribosomes. Back-translocation proceeds from a post-translocation (POST) complex to a pre-translocation (PRE) complex, thus giving elongation factor G a second chance to translocate the tRNAs correctly. Binds to ribosomes in a GTP-dependent manner. The chain is Elongation factor 4 from Wolbachia pipientis subsp. Culex pipiens (strain wPip).